We begin with the raw amino-acid sequence, 899 residues long: Plasma membrane ATPase (899 aa).

A disordered region spans residues 1 to 72 (MSAATEPTKE…TDPSYGLTSD (72 aa)). Residues 1 to 96 (MSAATEPTKE…SEETENLFVK (96 aa)) lie on the Cytoplasmic side of the membrane. Residues 17–29 (DSDDEDEDIDQLI) are compositionally biased toward acidic residues. Residues 97-117 (FLMFFIGPIQFVMEAAAILAA) traverse the membrane as a helical segment. The Extracellular portion of the chain corresponds to 118–121 (GLED). Residues 122 to 141 (WVDFGVICGLLFLNAAVGFI) form a helical membrane-spanning segment. Residues 142–272 (QEYQAGSIVD…GSGHFTEVLN (131 aa)) are Cytoplasmic-facing. The chain crosses the membrane as a helical span at residues 273–294 (GIGTILLILVIVTLLLVWVASF). The Extracellular portion of the chain corresponds to 295–305 (YRTNKIVRILR). Residues 306 to 328 (YTLAITIVGVPVGLPAVVTTTMA) form a helical membrane-spanning segment. Over 329–700 (VGAAYLAKKQ…IAILNRSLNI (372 aa)) the chain is Cytoplasmic. Aspartate 359 functions as the 4-aspartylphosphate intermediate in the catalytic mechanism. 2 residues coordinate Mg(2+): aspartate 615 and aspartate 619. A helical membrane pass occupies residues 701-719 (DLVVFIAIFADVATLAIAY). Over 720-735 (DNAPYSPKPVKWNLRR) the chain is Extracellular. Residues 736-755 (LWGMSVILGIILAIGTWITL) form a helical membrane-spanning segment. The Cytoplasmic portion of the chain corresponds to 756–805 (TTMFVPKGGIIQNFGSIDGVLFLQISLTENWLIFITRAAGPFWSSIPSWQ). A helical transmembrane segment spans residues 806–826 (LSGAVLIVDIIATMFCLFGWW). The Extracellular segment spans residues 827–838 (SQNWNDIVTVVR). Residues 839 to 855 (VWIFSFGVFCVMGGAYY) form a helical membrane-spanning segment. Residues 856–899 (MMSESEAFDRFMNGKSRRDKPSGRSVEDFLMAMQRVSTQHEKEN) lie on the Cytoplasmic side of the membrane.

It belongs to the cation transport ATPase (P-type) (TC 3.A.3) family. Type IIIA subfamily.

The protein resides in the cell membrane. It carries out the reaction ATP + H2O + H(+)(in) = ADP + phosphate + 2 H(+)(out). Activated by high pH or also by potassium ions when the medium pH is low. Functionally, the plasma membrane ATPase of plants and fungi is a hydrogen ion pump. The proton gradient it generates drives the active transport of nutrients by H(+)-symport. The resulting external acidification and/or internal alkinization may mediate growth responses. The protein is Plasma membrane ATPase (PMA1) of Kluyveromyces lactis (strain ATCC 8585 / CBS 2359 / DSM 70799 / NBRC 1267 / NRRL Y-1140 / WM37) (Yeast).